The chain runs to 253 residues: Triosephosphate isomerase (253 aa).

9–11 (NWK) contacts substrate. Histidine 95 functions as the Electrophile in the catalytic mechanism. The Proton acceptor role is filled by glutamate 167. Residues glycine 173, serine 213, and 234–235 (GG) each bind substrate. Serine 213 carries the phosphoserine modification.

It belongs to the triosephosphate isomerase family. As to quaternary structure, homodimer.

It is found in the cytoplasm. It carries out the reaction D-glyceraldehyde 3-phosphate = dihydroxyacetone phosphate. The protein operates within carbohydrate biosynthesis; gluconeogenesis. It functions in the pathway carbohydrate degradation; glycolysis; D-glyceraldehyde 3-phosphate from glycerone phosphate: step 1/1. Its function is as follows. Involved in the gluconeogenesis. Catalyzes stereospecifically the conversion of dihydroxyacetone phosphate (DHAP) to D-glyceraldehyde-3-phosphate (G3P). The protein is Triosephosphate isomerase of Bacillus licheniformis (strain ATCC 14580 / DSM 13 / JCM 2505 / CCUG 7422 / NBRC 12200 / NCIMB 9375 / NCTC 10341 / NRRL NRS-1264 / Gibson 46).